A 37-amino-acid polypeptide reads, in one-letter code: Large ribosomal subunit protein bL36 (37 aa).

The protein belongs to the bacterial ribosomal protein bL36 family.

This is Large ribosomal subunit protein bL36 from Synechococcus sp. (strain CC9311).